We begin with the raw amino-acid sequence, 113 residues long: Probable leucocin-A immunity protein (113 aa).

Belongs to the immunity protein EntA family.

In terms of biological role, imparts immunity to leucocin-A to naturally sensitive host strains. The chain is Probable leucocin-A immunity protein from Leuconostoc gelidum.